Here is a 221-residue protein sequence, read N- to C-terminus: PKHD-type hydroxylase PMT9312_1262 (221 aa).

The Fe2OG dioxygenase domain occupies 80-174; it reads IIHGIMFTKS…RLVCVGWIES (95 aa). Fe cation is bound by residues His-98, Asp-100, and His-155. Residue Arg-165 participates in 2-oxoglutarate binding.

It depends on Fe(2+) as a cofactor. The cofactor is L-ascorbate.

The sequence is that of PKHD-type hydroxylase PMT9312_1262 from Prochlorococcus marinus (strain MIT 9312).